Consider the following 298-residue polypeptide: ATP synthase gamma chain (298 aa).

The protein belongs to the ATPase gamma chain family. F-type ATPases have 2 components, CF(1) - the catalytic core - and CF(0) - the membrane proton channel. CF(1) has five subunits: alpha(3), beta(3), gamma(1), delta(1), epsilon(1). CF(0) has three main subunits: a, b and c.

The protein localises to the cell inner membrane. In terms of biological role, produces ATP from ADP in the presence of a proton gradient across the membrane. The gamma chain is believed to be important in regulating ATPase activity and the flow of protons through the CF(0) complex. This Bacteroides thetaiotaomicron (strain ATCC 29148 / DSM 2079 / JCM 5827 / CCUG 10774 / NCTC 10582 / VPI-5482 / E50) protein is ATP synthase gamma chain.